The chain runs to 478 residues: ATP-dependent RNA helicase DDX19A (478 aa).

Ala2 bears the N-acetylalanine mark. Residues 2 to 299 form an N-terminal lobe region; the sequence is ATDSWALAVD…DPNIIKLKRE (298 aa). A Glycyl lysine isopeptide (Lys-Gly) (interchain with G-Cter in SUMO1); alternate cross-link involves residue Lys26. Lys26 participates in a covalent cross-link: Glycyl lysine isopeptide (Lys-Gly) (interchain with G-Cter in SUMO2); alternate. Positions 31-55 are disordered; sequence KPDTNGVIKTNATPEKTDEEEKEDR. The tract at residues 54–67 is N-terminal helix; that stretch reads DRAAQSLLNKLIRS. Positions 91 to 119 match the Q motif motif; it reads KSFEELRLKPQLLQGVYAMGFNRPSKIQE. Residues Gln118 and 137-144 contribute to the ATP site; that span reads SQSGTGKT. In terms of domain architecture, Helicase ATP-binding spans 124–294; sequence MMLAEPPQNL…QKVVPDPNII (171 aa). The DEAD box motif lies at 241–244; that stretch reads DEAD. Residues 300–478 form a C-terminal lobe region; it reads EETLDTIKQY…DLDEIEKIAN (179 aa). Residues 305-473 enclose the Helicase C-terminal domain; the sequence is TIKQYYVLCN…RLDTDDLDEI (169 aa). Residues Arg428 and Arg431 each contribute to the ATP site.

This sequence belongs to the DEAD box helicase family. DDX19/DBP5 subfamily.

It is found in the cytoplasm. It localises to the nucleus. The protein localises to the nucleoplasm. The enzyme catalyses ATP + H2O = ADP + phosphate + H(+). Functionally, ATP-dependent RNA helicase involved in mRNA export from the nucleus. Rather than unwinding RNA duplexes, DDX19 functions as a remodeler of ribonucleoprotein particles, whereby proteins bound to nuclear mRNA are dissociated and replaced by cytoplasmic mRNA binding proteins. The sequence is that of ATP-dependent RNA helicase DDX19A (DDX19A) from Bos taurus (Bovine).